Here is a 399-residue protein sequence, read N- to C-terminus: Glutathione S-transferase LANCL1 (399 aa).

Ala-2 is subject to N-acetylalanine. Position 142 is an N6-acetyllysine (Lys-142). Cys-276 serves as a coordination point for Zn(2+). Lys-317 contributes to the glutathione binding site. Zn(2+)-binding residues include Cys-322 and His-323. 364 to 367 (RTAD) serves as a coordination point for glutathione.

It belongs to the LanC-like protein family. As to quaternary structure, interacts with the C-terminal of STOM. Interacts with the EPS8 SH3 domain. Interaction with EPS8 is inhibited by glutathione binding. As to expression, detected in spinal cord (at protein level). Ubiquitous. Strongly expressed in brain, testis, alveolar macrophages and epithelial cells of the lung, kidney and intestine. Expression in brain increases during the first postnatal month and remaining high in adult.

It localises to the cytoplasm. The protein localises to the cell membrane. It catalyses the reaction RX + glutathione = an S-substituted glutathione + a halide anion + H(+). The catalysed reaction is 1-chloro-2,4-dinitrobenzene + glutathione = 2,4-dinitrophenyl-S-glutathione + chloride + H(+). In terms of biological role, functions as a glutathione transferase. Catalyzes conjugation of the glutathione (GSH) to artificial substrates 1-chloro-2,4-dinitrobenzene (CDNB) and p-nitrophenyl acetate. Mitigates neuronal oxidative stress during normal postnatal development and in response to oxidative stresses probably through GSH antioxidant defense mechanism. May play a role in EPS8 signaling. Binds glutathione. This is Glutathione S-transferase LANCL1 from Mus musculus (Mouse).